Here is a 327-residue protein sequence, read N- to C-terminus: Olfactory receptor 226 (327 aa).

The Extracellular segment spans residues 1–26; the sequence is MERRNHSGRVSEFVLLGFPAPAPLRV. An N-linked (GlcNAc...) asparagine glycan is attached at N5. A helical membrane pass occupies residues 27-50; that stretch reads LLFFLSLLAYVLVLTENMLIIIAI. Over 51–58 the chain is Cytoplasmic; sequence RNHPTLHK. The helical transmembrane segment at 59–80 threads the bilayer; the sequence is PMYFFLANMSFLEIWYVTVTIP. Residues 81 to 104 lie on the Extracellular side of the membrane; the sequence is KMLAGFIGSKENHGQLISFEACMT. A disulfide bridge connects residues C102 and C194. A helical transmembrane segment spans residues 105 to 125; sequence QLYFFLGLGCTECVLLAVMAY. The Cytoplasmic portion of the chain corresponds to 126–144; it reads DRYVAICHPLHYPVIVSSR. Residues 145-163 form a helical membrane-spanning segment; it reads LCVQMAAGSWAGGFGISMV. Topologically, residues 164-201 are extracellular; sequence KVFLISRLSYCGPNTINHFFCDVSPLLNLSCTDMSTAE. A helical transmembrane segment spans residues 202–224; sequence LTDFVLAIFILLGPLSVTGASYM. The Cytoplasmic portion of the chain corresponds to 225-241; the sequence is AITGAVMRIPSAAGRHK. A helical transmembrane segment spans residues 242-265; that stretch reads AFSTCASHLTVVIIFYAASIFIYA. At 266–277 the chain is on the extracellular side; it reads RPKALSAFDTNK. A helical membrane pass occupies residues 278–297; that stretch reads LVSVLYAVIVPLFNPIIYCL. Over 298–327 the chain is Cytoplasmic; sequence RNQDVKRALRRTLHLAQDQEANTNKGSKNG.

The protein belongs to the G-protein coupled receptor 1 family. As to expression, olfactory epithelium.

Its subcellular location is the cell membrane. Odorant receptor. This is Olfactory receptor 226 (Olr226) from Rattus norvegicus (Rat).